The chain runs to 198 residues: Host transcription reprogramming factor 1 (198 aa).

A signal peptide spans Met1–Ala19. Disordered stretches follow at residues Pro21–Ser59 and Glu71–Leu198. The C2H2-type zinc-finger motif lies at His58–His81. Basic and acidic residues-rich tracts occupy residues Glu71–Asp80, Thr104–Glu128, and Lys167–Tyr177.

The protein resides in the secreted. It localises to the host nucleus. Functionally, secreted effector that translocates into the nuclei of host cells to reprogram the expression of immunity-associated genes by binding to effector binding elements (EBEs) in rice. Binds the 5'-CAATCTTC-3' EBE of promoters from targeted rice genes and probably recruits a yet to be determined host repressor. Causes ambivalent immunity with increased susceptibility to the hemibiotrophic pathogens Magnaporthe oryzae and Xanthomonas oryzae pv. oryzae, but enhances resistance to Cochliobolus miyabeanus, a necrotrophic pathogen. In Pyricularia oryzae (strain 70-15 / ATCC MYA-4617 / FGSC 8958) (Rice blast fungus), this protein is Host transcription reprogramming factor 1.